Reading from the N-terminus, the 397-residue chain is Glia-derived nexin (397 aa).

The first 19 residues, 1 to 19 (MNWHFPFFILTTVTLSSVY), serve as a signal peptide directing secretion. An N-linked (GlcNAc...) asparagine glycan is attached at N159.

It belongs to the serpin family.

It localises to the secreted. The protein resides in the extracellular space. In terms of biological role, serine protease inhibitor with activity toward thrombin, trypsin, and urokinase. Promotes neurite extension by inhibiting thrombin. Binds heparin. The protein is Glia-derived nexin (Serpine2) of Rattus norvegicus (Rat).